An 869-amino-acid chain; its full sequence is Ubiquitin carboxyl-terminal hydrolase 29 (869 aa).

Composition is skewed to polar residues over residues 104 to 120 and 140 to 150; these read SSTP…MSSQ and SLNTTPESGTP. Residues 104-226 are disordered; it reads SSTPCESQQP…KAVTLREQEK (123 aa). The span at 187–200 shows a compositional bias: basic and acidic residues; the sequence is VNKDIPKENTPDQK. Residues 201–212 show a composition bias toward basic residues; sequence KKSRRYYSRNRG. The segment covering 213-226 has biased composition (basic and acidic residues); sequence GKAEKAVTLREQEK. In terms of domain architecture, USP spans 289 to 826; the sequence is EGFPNLGNTC…SGYIFFYMHN (538 aa). Cys298 (nucleophile) is an active-site residue. Residues 723–754 form a disordered region; it reads SQEDPEKDLSRSPELQEDDPHSFAFGSDDSKD. The Proton acceptor role is filled by His781.

Belongs to the peptidase C19 family. As to expression, predominantly expressed in brain and testis. Highest expression levels in adult brain, especially in the cerebral cortex and hippocampus, and in the forebrain, face, and limb buds of midgestation mouse embryos.

It is found in the cytoplasm. The protein localises to the perinuclear region. It catalyses the reaction Thiol-dependent hydrolysis of ester, thioester, amide, peptide and isopeptide bonds formed by the C-terminal Gly of ubiquitin (a 76-residue protein attached to proteins as an intracellular targeting signal).. In terms of biological role, deubiquitinase involved in innate antiviral immunity by mediating 'Lys-48'-linked deubiquitination of CGAS, thereby promoting its stabilization. The sequence is that of Ubiquitin carboxyl-terminal hydrolase 29 from Mus musculus (Mouse).